The sequence spans 97 residues: DNA/RNA-binding protein Alba 1 (97 aa).

An N-acetylserine; by ard1 acetylase modification is found at Ser-2. Residues Lys-16, Lys-17, and Tyr-22 each contribute to the RNA site. An N6,N6,N6-trimethyllysine; alternate modification is found at Lys-16. N6,N6-dimethyllysine; alternate is present on Lys-16. Lys-16 is subject to N6-acetyllysine; alternate. Position 16 is an N6-methyllysine; alternate (Lys-16). Asn-31 is subject to Deamidated asparagine; partial. Gln-32 carries the deamidated glutamine; partial modification. Lys-40 carries the N6-methyllysine; partial modification. Residues Arg-42 and Arg-44 each coordinate RNA. Lys-48 bears the N6-acetyllysine; partial mark. Asp-51 carries the aspartate methyl ester; partial modification. A Deamidated asparagine; partial modification is found at Asn-58. Lys-64 is modified (N6-acetyllysine; alternate; partial). Residue Lys-64 is modified to N6-methyllysine; alternate; partial. Lys-68 carries the N6-acetyllysine; partial modification. Residue Gln-75 is modified to N5-methylglutamine; partial. At Asp-81 the chain carries Aspartate methyl ester; partial. Lys-97 carries the N6-methyllysine; partial modification.

The protein belongs to the histone-like Alba family. As to quaternary structure, forms homodimers and higher order oligomers, e.g. homotetramers. Acetylated. Acetylation at Lys-16 by the Pat acetylase decreases DNA-binding affinity. Deacetylation at Lys-16 by the CobB deacetylase increases DNA-binding affinity. Acetylation at Ser-2 is involved in the regulation of the turnover of the protein.

The protein resides in the cytoplasm. Its subcellular location is the chromosome. Binds double-stranded DNA tightly but without sequence specificity. Involved in DNA compaction. Possesses DNA endonuclease activity. Prevents transcription after DNA binding. Binds single-stranded DNA and RNA in vitro. Binds rRNA and mRNA in vivo. May play a role in maintaining the structural and functional stability of RNA, and, perhaps, ribosomes. Binds double-stranded RNA (dsRNA) and exhibits RNA chaperone activity. Required for normal growth. The protein is DNA/RNA-binding protein Alba 1 of Saccharolobus islandicus (strain REY15A) (Sulfolobus islandicus).